The following is a 208-amino-acid chain: Probable GTP-binding protein EngB (208 aa).

The 183-residue stretch at 23–205 (LTSEMVILGR…RQTLLKYLLT (183 aa)) folds into the EngB-type G domain. Residues 31–38 (GRSNVGKS), 57–61 (GKTRL), 84–87 (DLPG), 154–157 (TKFD), and 182–184 (FNA) each bind GTP. Residues Ser38 and Thr59 each coordinate Mg(2+).

The protein belongs to the TRAFAC class TrmE-Era-EngA-EngB-Septin-like GTPase superfamily. EngB GTPase family. Mg(2+) is required as a cofactor.

Its function is as follows. Necessary for normal cell division and for the maintenance of normal septation. The protein is Probable GTP-binding protein EngB of Helicobacter pylori (strain P12).